The primary structure comprises 593 residues: RNA-binding protein 47 (593 aa).

Residues 1–20 show a composition bias toward low complexity; sequence MTAEDSTAAMSSDSAAGSSA. A disordered region spans residues 1-25; sequence MTAEDSTAAMSSDSAAGSSAKVPEG. 3 RRM domains span residues 71 to 149, 151 to 233, and 246 to 318; these read CEVF…CSVD, CRLF…WAEP, and KILY…LAKP. The residue at position 332 (Arg332) is an Omega-N-methylarginine. Arg394 and Arg405 each carry asymmetric dimethylarginine; alternate. Omega-N-methylarginine; alternate is present on residues Arg394 and Arg405.

This sequence belongs to the RRM RBM47 family. In terms of assembly, homodimer. Interacts with A1CF. Interacts with APOBEC1; form an mRNA editing complex. Interacts with RBPMS.

It is found in the nucleus. The protein resides in the cytoplasm. Its function is as follows. Single-stranded RNA-binding protein that functions in a variety of RNA processes, including alternative splicing, RNA stabilization, and RNA editing. Functions as an enzyme-substrate adapter for the cytidine deaminase APOBEC1. With APOBEC1 forms an mRNA editing complex involved into cytidine to uridine editing of a variety of mRNA molecules. Through the binding of their 3'UTR, also stabilizes a variety of mRNAs and regulates the expression of genes such as the interferon alpha/beta receptor and interleukin-10. Also involved in the alternative splicing of several genes including TJP1. Binds the pre-mRNA (U)GCAUG consensus sequences in downstream intronic regions of alternative exons, regulating their exclusion and inclusion into mRNAs. Independently of its RNA-binding activity, could negatively regulate MAVS by promoting its lysosomal degradation. This Homo sapiens (Human) protein is RNA-binding protein 47.